A 578-amino-acid polypeptide reads, in one-letter code: Suppressor of smlA (578 aa).

Involved in regulation of group size of aggregation streams. The protein is Suppressor of smlA (sslA1) of Dictyostelium discoideum (Social amoeba).